A 224-amino-acid chain; its full sequence is Imidazoleglycerol-phosphate dehydratase (224 aa).

It belongs to the imidazoleglycerol-phosphate dehydratase family.

It catalyses the reaction D-erythro-1-(imidazol-4-yl)glycerol 3-phosphate = 3-(imidazol-4-yl)-2-oxopropyl phosphate + H2O. Its pathway is amino-acid biosynthesis; L-histidine biosynthesis; L-histidine from 5-phospho-alpha-D-ribose 1-diphosphate: step 6/9. In Komagataella pastoris (Yeast), this protein is Imidazoleglycerol-phosphate dehydratase (HIS3).